A 972-amino-acid chain; its full sequence is Mast/stem cell growth factor receptor Kit (972 aa).

Positions 1–25 are cleaved as a signal peptide; sequence MRGARGAWDFLCVLLLLLRVQTGSS. The Extracellular portion of the chain corresponds to 26–520; sequence QPSVSPEEAS…QIQPHTLFTP (495 aa). Ig-like C2-type domains follow at residues 27–112, 121–205, 212–308, 317–410, and 413–507; these read PSVS…VFVR, DRSL…LKVR, PVVS…LEVV, PMIN…VYVN, and PEIL…FNFA. A disulfide bridge links Cys58 with Cys97. 2 N-linked (GlcNAc...) asparagine glycosylation sites follow: Asn130 and Asn145. 3 disulfide bridges follow: Cys136/Cys186, Cys151/Cys183, and Cys233/Cys290. Residues Asn283, Asn300, Asn320, Asn352, Asn367, Asn463, and Asn486 are each glycosylated (N-linked (GlcNAc...) asparagine). Cys428 and Cys491 form a disulfide bridge. Residues 521 to 541 form a helical membrane-spanning segment; sequence LLIGFVVVAGMMCIIVMILTY. At 542 to 972 the chain is on the cytoplasmic side; the sequence is KYLQKPMYEV…SQPLLVRDDV (431 aa). A phosphotyrosine mark is found at Tyr543 and Tyr549. Tyr564 serves as a coordination point for Mg(2+). Phosphotyrosine; by autocatalysis is present on residues Tyr564 and Tyr566. Residues 564 to 566 form an important for interaction with phosphotyrosine-binding proteins region; the sequence is YVY. The Protein kinase domain maps to 585 to 933; that stretch reads LSFGKTLGAG…ISESTNHIYS (349 aa). Residues 592–599, Lys619, and 667–673 contribute to the ATP site; these read GAGAFGKV and EYCCYGD. 2 positions are modified to phosphotyrosine; by autocatalysis: Tyr699 and Tyr717. Tyr726 carries the post-translational modification Phosphotyrosine. Ser737 and Ser742 each carry phosphoserine; by PKC/PRKCA. Asp788 (proton acceptor) is an active-site residue. Arg792 serves as a coordination point for ATP. Mg(2+) is bound by residues Asn793 and Asp806. Ser817 is modified (phosphoserine). Residue Tyr819 is modified to Phosphotyrosine; by autocatalysis. Ser887 is subject to Phosphoserine. The residue at position 896 (Tyr896) is a Phosphotyrosine. Phosphotyrosine; by autocatalysis is present on Tyr932. Phosphoserine is present on Ser955.

It belongs to the protein kinase superfamily. Tyr protein kinase family. CSF-1/PDGF receptor subfamily. Monomer in the absence of bound KITLG/SCF. Homodimer in the presence of bound KITLG/SCF, forming a heterotetramer with two KITLG/SCF molecules. Interacts (via phosphorylated tyrosine residues) with the adapter proteins GRB2 and GRB7 (via SH2 domain), and SH2B2/APS. Interacts (via C-terminus) with MPDZ (via the tenth PDZ domain). Interacts (via phosphorylated tyrosine residues) with PIK3R1 and PIK3CD. Interacts (via phosphorylated tyrosine) with CRK (isoform Crk-II), FYN, SHC1 and MATK/CHK (via SH2 domain). Interacts with LYN and FES/FPS. Interacts (via phosphorylated tyrosine residues) with the protein phosphatases PTPN6/SHP-1 (via SH2 domain), PTPN11/SHP-2 (via SH2 domain) and PTPRU. Interacts with PLCG1. Interacts with DOK1 and TEC. Interacts with IL1RAP (independent of stimulation with KITLG/SCF). A mast cell-specific KITLG/SCF-induced interleukin-33 signaling complex contains IL1RL1, IL1RAP, KIT and MYD88. Ubiquitinated by SOCS6. KIT is rapidly ubiquitinated after autophosphorylation induced by KITLG/SCF binding, leading to internalization and degradation. Post-translationally, autophosphorylated on tyrosine residues. KITLG/SCF binding promotes autophosphorylation. Phosphorylated tyrosine residues are important for interaction with specific binding partners.

It localises to the cell membrane. The enzyme catalyses L-tyrosyl-[protein] + ATP = O-phospho-L-tyrosyl-[protein] + ADP + H(+). With respect to regulation, present in an inactive conformation in the absence of bound ligand. KITLG/SCF binding leads to dimerization and activation by autophosphorylation on tyrosine residues. Activity is down-regulated by PRKCA-mediated phosphorylation on serine residues. Its function is as follows. Tyrosine-protein kinase that acts as a cell-surface receptor for the cytokine KITLG/SCF and plays an essential role in the regulation of cell survival and proliferation, hematopoiesis, stem cell maintenance, gametogenesis, mast cell development, migration and function, and in melanogenesis. In response to KITLG/SCF binding, KIT can activate several signaling pathways. Phosphorylates PIK3R1, PLCG1, SH2B2/APS and CBL. Activates the AKT1 signaling pathway by phosphorylation of PIK3R1, the regulatory subunit of phosphatidylinositol 3-kinase. Activated KIT also transmits signals via GRB2 and activation of RAS, RAF1 and the MAP kinases MAPK1/ERK2 and/or MAPK3/ERK1. Promotes activation of STAT family members STAT1, STAT3, STAT5A and STAT5B. Activation of PLCG1 leads to the production of the cellular signaling molecules diacylglycerol and inositol 1,4,5-trisphosphate. KIT signaling is modulated by protein phosphatases, and by rapid internalization and degradation of the receptor. Activated KIT promotes phosphorylation of the protein phosphatases PTPN6/SHP-1 and PTPRU, and of the transcription factors STAT1, STAT3, STAT5A and STAT5B. Promotes phosphorylation of PIK3R1, CBL, CRK (isoform Crk-II), LYN, MAPK1/ERK2 and/or MAPK3/ERK1, PLCG1, SRC and SHC1. The polypeptide is Mast/stem cell growth factor receptor Kit (KIT) (Callithrix jacchus (White-tufted-ear marmoset)).